The primary structure comprises 126 residues: Histone H2B type 1-L (126 aa).

A compositionally biased stretch (low complexity) spans 1 to 12; it reads MPELAKSAPAPK. A disordered region spans residues 1-36; the sequence is MPELAKSAPAPKKGSKKAVTKAQKKDGKKRKRSRKE. P2 is modified (N-acetylproline). Residue E3 is modified to ADP-ribosyl glutamic acid. The residue at position 6 (K6) is an N6-(2-hydroxyisobutyryl)lysine; alternate. K6 carries the N6-(beta-hydroxybutyryl)lysine; alternate modification. K6 bears the N6-acetyllysine; alternate mark. K6 is modified (N6-butyryllysine; alternate). An N6-crotonyllysine; alternate modification is found at K6. The residue at position 6 (K6) is an N6-lactoyllysine; alternate. Residue K6 forms a Glycyl lysine isopeptide (Lys-Gly) (interchain with G-Cter in SUMO2); alternate linkage. At S7 the chain carries ADP-ribosylserine. K12 is subject to N6-(beta-hydroxybutyryl)lysine; alternate. 2 positions are modified to N6-acetyllysine; alternate: K12 and K13. Residues K12 and K13 each carry the N6-crotonyllysine; alternate modification. N6-lactoyllysine; alternate is present on K12. K13 bears the N6-(2-hydroxyisobutyryl)lysine; alternate mark. S15 carries the post-translational modification Phosphoserine; by STK4/MST1. An N6-acetyllysine; alternate mark is found at K16, K17, K21, and K24. N6-crotonyllysine; alternate is present on residues K16, K17, K21, and K24. N6-lactoyllysine; alternate is present on residues K16, K17, K21, and K24. N6-(beta-hydroxybutyryl)lysine; alternate is present on residues K17 and K21. At K17 the chain carries N6-glutaryllysine; alternate. An N6-(2-hydroxyisobutyryl)lysine; alternate mark is found at K21 and K24. Position 21 is an N6-butyryllysine; alternate (K21). Residue K21 forms a Glycyl lysine isopeptide (Lys-Gly) (interchain with G-Cter in SUMO2); alternate linkage. The residue at position 25 (K25) is an N6-(2-hydroxyisobutyryl)lysine. Residue K35 is modified to N6-(2-hydroxyisobutyryl)lysine; alternate. K35 carries the post-translational modification N6-(beta-hydroxybutyryl)lysine; alternate. At K35 the chain carries N6-crotonyllysine; alternate. K35 is modified (N6-glutaryllysine; alternate). K35 carries the N6-succinyllysine; alternate modification. Residue K35 forms a Glycyl lysine isopeptide (Lys-Gly) (interchain with G-Cter in ubiquitin); alternate linkage. The residue at position 36 (E36) is a PolyADP-ribosyl glutamic acid. Phosphoserine; by AMPK is present on S37. 3 positions are modified to N6-(2-hydroxyisobutyryl)lysine; alternate: K44, K47, and K58. The residue at position 44 (K44) is an N6-lactoyllysine; alternate. N6-glutaryllysine; alternate occurs at positions 44 and 47. An N6-methyllysine; alternate modification is found at K47. K58 carries the post-translational modification N6,N6-dimethyllysine; alternate. The residue at position 80 (R80) is a Dimethylated arginine. K86 carries the N6-(2-hydroxyisobutyryl)lysine; alternate modification. The residue at position 86 (K86) is an N6-(beta-hydroxybutyryl)lysine; alternate. An N6-acetyllysine; alternate modification is found at K86. N6-lactoyllysine; alternate is present on K86. The residue at position 86 (K86) is an N6,N6,N6-trimethyllysine; alternate. R87 and R93 each carry omega-N-methylarginine. K109 is modified (N6-(2-hydroxyisobutyryl)lysine; alternate). K109 is subject to N6-lactoyllysine; alternate. K109 carries the N6-glutaryllysine; alternate modification. K109 carries the N6-methyllysine; alternate modification. A glycan (O-linked (GlcNAc) serine) is linked at S113. T116 carries the phosphothreonine modification. Residues K117 and K121 each carry the N6-(2-hydroxyisobutyryl)lysine; alternate modification. N6-(beta-hydroxybutyryl)lysine; alternate is present on residues K117 and K121. N6-lactoyllysine; alternate occurs at positions 117 and 121. K117 and K121 each carry N6-glutaryllysine; alternate. N6-succinyllysine; alternate is present on residues K117 and K121. K117 bears the N6-malonyllysine; alternate mark. At K117 the chain carries N6-methylated lysine; alternate. A Glycyl lysine isopeptide (Lys-Gly) (interchain with G-Cter in ubiquitin); alternate cross-link involves residue K121.

Belongs to the histone H2B family. The nucleosome is a histone octamer containing two molecules each of H2A, H2B, H3 and H4 assembled in one H3-H4 heterotetramer and two H2A-H2B heterodimers. The octamer wraps approximately 147 bp of DNA. In terms of processing, monoubiquitination at Lys-35 (H2BK34Ub) by the MSL1/MSL2 dimer is required for histone H3 'Lys-4' (H3K4me) and 'Lys-79' (H3K79me) methylation and transcription activation at specific gene loci, such as HOXA9 and MEIS1 loci. Similarly, monoubiquitination at Lys-121 (H2BK120Ub) by the RNF20/40 complex gives a specific tag for epigenetic transcriptional activation and is also prerequisite for histone H3 'Lys-4' and 'Lys-79' methylation. It also functions cooperatively with the FACT dimer to stimulate elongation by RNA polymerase II. H2BK120Ub also acts as a regulator of mRNA splicing: deubiquitination by USP49 is required for efficient cotranscriptional splicing of a large set of exons. Post-translationally, phosphorylation at Ser-37 (H2BS36ph) by AMPK in response to stress promotes transcription. Phosphorylated on Ser-15 (H2BS14ph) by STK4/MST1 during apoptosis; which facilitates apoptotic chromatin condensation. Also phosphorylated on Ser-15 in response to DNA double strand breaks (DSBs), and in correlation with somatic hypermutation and immunoglobulin class-switch recombination. GlcNAcylation at Ser-113 promotes monoubiquitination of Lys-121. It fluctuates in response to extracellular glucose, and associates with transcribed genes. In terms of processing, ADP-ribosylated by PARP1 or PARP2 on Ser-7 (H2BS6ADPr) in response to DNA damage. H2BS6ADPr promotes recruitment of CHD1L. Mono-ADP-ribosylated on Glu-3 (H2BE2ADPr) by PARP3 in response to single-strand breaks. Poly ADP-ribosylation on Glu-36 (H2BE35ADPr) by PARP1 regulates adipogenesis: it inhibits phosphorylation at Ser-37 (H2BS36ph), thereby blocking expression of pro-adipogenetic genes. Post-translationally, crotonylation (Kcr) is specifically present in male germ cells and marks testis-specific genes in post-meiotic cells, including X-linked genes that escape sex chromosome inactivation in haploid cells. Crotonylation marks active promoters and enhancers and confers resistance to transcriptional repressors. It is also associated with post-meiotically activated genes on autosomes. Lactylated in macrophages by EP300/P300 by using lactoyl-CoA directly derived from endogenous or exogenous lactate, leading to stimulates gene transcription.

It localises to the nucleus. The protein localises to the chromosome. Functionally, core component of nucleosome. Nucleosomes wrap and compact DNA into chromatin, limiting DNA accessibility to the cellular machineries which require DNA as a template. Histones thereby play a central role in transcription regulation, DNA repair, DNA replication and chromosomal stability. DNA accessibility is regulated via a complex set of post-translational modifications of histones, also called histone code, and nucleosome remodeling. This Homo sapiens (Human) protein is Histone H2B type 1-L.